Reading from the N-terminus, the 368-residue chain is Quinolinate synthase (368 aa).

Iminosuccinate-binding residues include His46 and Ser63. Position 110 (Cys110) interacts with [4Fe-4S] cluster. Iminosuccinate-binding positions include 141–143 (YVN) and Ser162. Residue Cys230 participates in [4Fe-4S] cluster binding. Residues 256–258 (HPE) and Thr273 each bind iminosuccinate. Cys320 is a [4Fe-4S] cluster binding site.

This sequence belongs to the quinolinate synthase family. Type 3 subfamily. Requires [4Fe-4S] cluster as cofactor.

It is found in the cytoplasm. It carries out the reaction iminosuccinate + dihydroxyacetone phosphate = quinolinate + phosphate + 2 H2O + H(+). It participates in cofactor biosynthesis; NAD(+) biosynthesis; quinolinate from iminoaspartate: step 1/1. Catalyzes the condensation of iminoaspartate with dihydroxyacetone phosphate to form quinolinate. The sequence is that of Quinolinate synthase from Bacillus thuringiensis subsp. konkukian (strain 97-27).